Consider the following 367-residue polypeptide: Trans-enoyl reductase opdC (367 aa).

Residues Tyr47–Lys50, Ser199–Asn202, Tyr217, Leu264–Asp265, and Ile353–Thr354 contribute to the NADP(+) site.

Belongs to the zinc-containing alcohol dehydrogenase family. In terms of assembly, monomer.

The protein operates within secondary metabolite biosynthesis. Functionally, trans-enoyl reductase; part of the gene cluster that mediates the biosynthesis of oxopyrrolidines, polyketide-amino acid hybrid compounds with feature structures of tetramic acid. The polyketide chain is first assembled by the highly reducing PKS module of opdA using acetyl-CoA as the starter unit and five malonyl-CoA as the extender units. OpdC acts as a trans-acting enoyl reductase and reduces the terminal alkenyl to alkane. The 17R in oxopyrrolidine A and 15R, 17S in oxopyrrolidine B are generated by non-stereospecific catalysis of the ketoreductase (KR) domain and enoyl reductases. Then the polyketides with specific configurations are transferred to the NRPS module of opdA and linked to L-tyrosine to form an amide bond. Finally, the oxopyrrolidines are offloaded through a Dieckmann cyclization catalyzed by the terminal D domain to give a tetramic acid moiety. This is Trans-enoyl reductase opdC from Penicillium oxalicum (strain 114-2 / CGMCC 5302) (Penicillium decumbens).